The primary structure comprises 591 residues: L-fucose isomerase (591 aa).

Active-site proton acceptor residues include Glu-337 and Asp-361. Residues Glu-337, Asp-361, and His-528 each contribute to the Mn(2+) site.

This sequence belongs to the L-fucose isomerase family. Homohexamer. The cofactor is Mn(2+).

The protein localises to the cytoplasm. It catalyses the reaction L-fucose = L-fuculose. The protein operates within carbohydrate degradation; L-fucose degradation; L-lactaldehyde and glycerone phosphate from L-fucose: step 1/3. Its function is as follows. Converts the aldose L-fucose into the corresponding ketose L-fuculose. The protein is L-fucose isomerase of Citrobacter koseri (strain ATCC BAA-895 / CDC 4225-83 / SGSC4696).